We begin with the raw amino-acid sequence, 190 residues long: Voltage-dependent calcium channel gamma-like subunit (190 aa).

Helical transmembrane passes span 25–45 (FIRT…SVSI), 96–116 (ALAV…QLCE), 131–151 (LLVS…LLRN), and 155–175 (LIGF…LFLN).

This sequence belongs to the PMP-22/EMP/MP20 family. CACNG subfamily. In terms of assembly, the L-type calcium channel is composed of five subunits: alpha-1, alpha-2/delta, beta and gamma.

The protein localises to the membrane. Its function is as follows. Thought to stabilize the calcium channel in an inactivated (closed) state. Modulates calcium current when coexpressed with CACNA1G. In Homo sapiens (Human), this protein is Voltage-dependent calcium channel gamma-like subunit.